The following is a 438-amino-acid chain: MSHEGEEDLLEYSDNEQEIQVDNTKATEVAGNGEEAADGKDGDKKGSYVGIHSTGFKDFLLKPELSRAIIDCGFEHPSEVQQHTIPQSIHGTDVLCQAKSGLGKTAVFVLSTLQQLDPVPGEVSVVVLCNARELAYQIRNEYLRFSKYMPDVKTAVFYGGTDTRKDIELLKNKDTAPHIVVATPGRLKALVRDNNIDLSHVKNFVIDECDKVLEELDMRRDVQDIFRATPRDKQVMMFSATLSQEIRPICRRFLQNPLEIFVDDEAKLTLHGLQQYYIRLEEREKNRKLAQLLDDLEFNQVIIFVKSTLRANELTKLLNASNFPAITVHGHMRQEERIARYKAFKEFEKRICVSTDVFGRGIDIERINLAINYDMPSEADQYLHRVGRAGRFGTKGLAISLVSSKDDEEVLAKIQERFDVKITEFPEEGVDPSTYLNT.

Acidic residues predominate over residues 1–19 (MSHEGEEDLLEYSDNEQEI). The segment at 1–44 (MSHEGEEDLLEYSDNEQEIQVDNTKATEVAGNGEEAADGKDGDK) is disordered. The Q motif motif lies at 54-82 (TGFKDFLLKPELSRAIIDCGFEHPSEVQQ). Residues 85 to 260 (IPQSIHGTDV…RRFLQNPLEI (176 aa)) form the Helicase ATP-binding domain. 98–105 (AKSGLGKT) is an ATP binding site. Positions 207–210 (DECD) match the DECD box motif. The Helicase C-terminal domain maps to 272–433 (GLQQYYIRLE…EFPEEGVDPS (162 aa)).

Belongs to the DEAD box helicase family. DECD subfamily.

It localises to the nucleus. It catalyses the reaction ATP + H2O = ADP + phosphate + H(+). ATP-binding RNA helicase involved in transcription elongation and required for the export of mRNA out of the nucleus. SUB2 also plays a role in pre-mRNA splicing and spliceosome assembly. May be involved in rDNA and telomeric silencing, and maintenance of genome integrity. This is ATP-dependent RNA helicase SUB2 (SUB2) from Eremothecium gossypii (strain ATCC 10895 / CBS 109.51 / FGSC 9923 / NRRL Y-1056) (Yeast).